Consider the following 267-residue polypeptide: Stomatin-3 (267 aa).

A helical transmembrane segment spans residues Phe-17–Phe-37.

The protein belongs to the band 7/mec-2 family.

Its subcellular location is the membrane. This is Stomatin-3 (sto-3) from Caenorhabditis elegans.